The following is a 350-amino-acid chain: Spermidine/putrescine import ATP-binding protein PotA (350 aa).

Residues 6-236 (LELRNISKQY…PENLWTAQFI (231 aa)) form the ABC transporter domain. 38–45 (GPSGCGKT) is a binding site for ATP.

It belongs to the ABC transporter superfamily. Spermidine/putrescine importer (TC 3.A.1.11.1) family. In terms of assembly, the complex is composed of two ATP-binding proteins (PotA), two transmembrane proteins (PotB and PotC) and a solute-binding protein (PotD).

It is found in the cell membrane. It catalyses the reaction ATP + H2O + polyamine-[polyamine-binding protein]Side 1 = ADP + phosphate + polyamineSide 2 + [polyamine-binding protein]Side 1.. Part of the ABC transporter complex PotABCD involved in spermidine/putrescine import. Responsible for energy coupling to the transport system. This Spiroplasma citri protein is Spermidine/putrescine import ATP-binding protein PotA.